The sequence spans 435 residues: Monodehydroascorbate reductase 3, cytosolic (435 aa).

FAD is bound by residues 14–17 (GGVA), glutamate 41, arginine 48, lysine 53, isoleucine 96, and 147–148 (RE). NAD(+) contacts are provided by residues 172 to 178 (GGYIGLE), glutamate 196, arginine 202, and glycine 261. 174 to 178 (YIGLE) lines the NADP(+) pocket. NADP(+) is bound by residues arginine 202 and glycine 261. Aspartate 298 contacts FAD. Position 314–315 (314–315 (EH)) interacts with NAD(+). NADP(+) is bound at residue 314 to 315 (EH). Valine 316 lines the FAD pocket. Arginine 320 is an L-ascorbate binding site. Residue tyrosine 349 participates in FAD binding. Tyrosine 349 is an NAD(+) binding site. Position 349 (tyrosine 349) interacts with NADP(+). Arginine 351 serves as a coordination point for L-ascorbate.

The protein belongs to the FAD-dependent oxidoreductase family. It depends on FAD as a cofactor.

The protein resides in the cytoplasm. The catalysed reaction is 2 monodehydro-L-ascorbate radical + NADH + H(+) = 2 L-ascorbate + NAD(+). Catalyzes the conversion of monodehydroascorbate to ascorbate, oxidizing NADH in the process. Ascorbate is a major antioxidant against reactive oxygen species (ROS) and nitric oxide (NO). Can use NADPH as electron donor, but possesses lower activity compared to NADH as electron donor. This chain is Monodehydroascorbate reductase 3, cytosolic, found in Oryza sativa subsp. japonica (Rice).